A 547-amino-acid polypeptide reads, in one-letter code: Tripartite motif-containing protein 5 (547 aa).

An N-acetylalanine modification is found at Ala2. The RING-type zinc finger occupies 15–59; the sequence is CPICLELLTEPLSLDCGHSFCQACITANHKESTLHQGERSCPLCR. Residue Ser86 is modified to Phosphoserine. The B box-type zinc-finger motif lies at 91 to 132; the sequence is QKVDRCARHGEKLLLFCQQHGNVICWLCERSQEHRGHSTFLV. 4 residues coordinate Zn(2+): Cys96, His99, Cys118, and His124. The stretch at 132–225 forms a coiled coil; the sequence is VEEVAQKYQE…AQSENDMVLQ (94 aa). The interval 186-199 is required for interaction with GABARAP and for autophagy; sequence FKQLRDILDCEESN. Positions 280–547 constitute a B30.2/SPRY domain; the sequence is PDLKGMLQVF…LPMTLCSPSS (268 aa).

It belongs to the TRIM/RBCC family. As to quaternary structure, can form homodimers and homotrimers. In addition to lower-order dimerization, also exhibits a higher-order multimerization and both low- and high-order multimerizations are essential for its restriction activity. Interacts with BTBD1 and BTBD2. Interacts with PSMC4, PSMC5, PSMD7 and HSPA8/HSC70. Interacts (via B30.2/SPRY domain) with HSPA1A/B. Interacts with PSMC2, MAP3K7/TAK1, TAB2 and TAB3. Interacts with SQSTM1. Interacts with TRIM6 and TRIM34. Interacts with ULK1 (phosphorylated form), GABARAP, GABARAPL1, GABARAPL2, MAP1LC3A, MAP1LC3C and BECN1. In terms of processing, degraded in a proteasome-independent fashion in the absence of viral infection but in a proteasome-dependent fashion following exposure to restriction sensitive virus. Post-translationally, autoubiquitinated in a RING finger- and UBE2D2-dependent manner. Monoubiquitinated by TRIM21. Deubiquitinated by Yersinia YopJ. Ubiquitination may not lead to proteasomal degradation.

The protein resides in the cytoplasm. It is found in the nucleus. The enzyme catalyses S-ubiquitinyl-[E2 ubiquitin-conjugating enzyme]-L-cysteine + [acceptor protein]-L-lysine = [E2 ubiquitin-conjugating enzyme]-L-cysteine + N(6)-ubiquitinyl-[acceptor protein]-L-lysine.. The protein operates within protein modification; protein ubiquitination. Functionally, capsid-specific restriction factor that prevents infection from non-host-adapted retroviruses. Blocks viral replication early in the life cycle, after viral entry but before reverse transcription. In addition to acting as a capsid-specific restriction factor, also acts as a pattern recognition receptor that activates innate immune signaling in response to the retroviral capsid lattice. Binding to the viral capsid triggers its E3 ubiquitin ligase activity, and in concert with the heterodimeric ubiquitin conjugating enzyme complex UBE2V1-UBE2N (also known as UBC13-UEV1A complex) generates 'Lys-63'-linked polyubiquitin chains, which in turn are catalysts in the autophosphorylation of the MAP3K7/TAK1 complex (includes TAK1, TAB2, and TAB3). Activation of the MAP3K7/TAK1 complex by autophosphorylation results in the induction and expression of NF-kappa-B and MAPK-responsive inflammatory genes, thereby leading to an innate immune response in the infected cell. Plays a role in regulating autophagy through activation of autophagy regulator BECN1 by causing its dissociation from its inhibitors BCL2 and TAB2. In Ateles geoffroyi (Black-handed spider monkey), this protein is Tripartite motif-containing protein 5 (TRIM5).